The sequence spans 1434 residues: Pleiotropic drug resistance protein 1 (1434 aa).

Residues 1–22 (MEPANLSNLRGSSLRGSTRGSL) are disordered. Positions 161-434 (LNSLHILSSR…FESMGFKCPQ (274 aa)) constitute an ABC transporter 1 domain. 194-201 (GPPSSGKT) serves as a coordination point for ATP. Residues 512–725 (ELLKVCTERE…SVNSILVNEF (214 aa)) form the ABC transmembrane type-2 1 domain. 7 consecutive transmembrane segments (helical) span residues 530–550 (FVYM…MTLF), 563–583 (GGIY…NGMS), 618–638 (IPVT…VIGF), 649–669 (FLLL…IGAV), 675–695 (VAST…GFVL), 702–722 (SWWI…SILV), and 760–780 (IGVG…SLAL). Positions 793-824 (LPEDGENAENGEVSSQITSTDGGDSISESQNN) are disordered. Residues 804-824 (EVSSQITSTDGGDSISESQNN) are compositionally biased toward polar residues. The 253-residue stretch at 837-1089 (ITFDDVVYSV…HLIKYFESNP (253 aa)) folds into the ABC transporter 2 domain. 882–889 (GVSGAGKT) is a binding site for ATP. The region spanning 1162–1376 (TQCVACLWKQ…TLYGLVASQF (215 aa)) is the ABC transmembrane type-2 2 domain. 7 helical membrane-spanning segments follow: residues 1181–1201 (YTAV…TMFW), 1221–1241 (YAAV…VVAI), 1269–1289 (IPYI…MIGF), 1296–1316 (FFWY…YGMM), 1326–1346 (VASI…GFII), 1357–1377 (WYYW…SQFG), and 1406–1426 (VVAA…AFAI).

The protein belongs to the ABC transporter superfamily. ABCG family. PDR (TC 3.A.1.205) subfamily.

The protein localises to the membrane. In terms of biological role, may be a general defense protein. This is Pleiotropic drug resistance protein 1 (PDR1) from Nicotiana tabacum (Common tobacco).